A 1259-amino-acid chain; its full sequence is Zinc finger protein BRUTUS-like At1g74770 (1259 aa).

A helical transmembrane segment spans residues 441–461; that stretch reads LLYTSIHVLPLGLLKCVILWF. Basic and acidic residues-rich tracts occupy residues 904-916 and 924-934; these read KEEK…ESKK and EGDKEQTDKMS. The disordered stretch occupies residues 904 to 938; the sequence is KEEKDLERSESKKICRGSNQEGDKEQTDKMSQKVS. Residues 1018–1087 form a CHY-type zinc finger; it reads PHSLIFGCNH…ANCSNTSCKS (70 aa). 24 residues coordinate Zn(2+): C1025, H1027, C1038, C1039, C1045, C1048, H1049, H1055, C1067, C1070, C1080, C1085, C1094, C1097, H1108, C1109, C1112, C1115, H1127, C1128, C1131, C1134, H1142, and C1144. The segment at 1089–1152 adopts a CTCHY-type zinc-finger fold; that stretch reads MGKYFCKICK…VCREKCLEDN (64 aa). An RING-type; atypical zinc finger spans residues 1153-1195; the sequence is CPICHEYIFTSSSPVKALPCGHLMHSTCFQEYTCSHYTCPVCS.

In terms of assembly, binds zinc and iron ions.

The protein localises to the membrane. It localises to the nucleus. It functions in the pathway protein modification; protein ubiquitination. Probable E3 ubiquitin-protein ligase that may regulate the response to iron deficiency and thus contributes to iron homeostasis. This chain is Zinc finger protein BRUTUS-like At1g74770, found in Arabidopsis thaliana (Mouse-ear cress).